The primary structure comprises 303 residues: 2-dehydropantoate 2-reductase (303 aa).

NADP(+) is bound by residues 7 to 12 (GCGALG), Asn-98, and Ala-122. Asn-98 lines the substrate pocket. Catalysis depends on Lys-176, which acts as the Proton donor. Positions 180, 184, 194, and 244 each coordinate substrate. Glu-256 lines the NADP(+) pocket.

This sequence belongs to the ketopantoate reductase family.

It is found in the cytoplasm. It catalyses the reaction (R)-pantoate + NADP(+) = 2-dehydropantoate + NADPH + H(+). It participates in cofactor biosynthesis; (R)-pantothenate biosynthesis; (R)-pantoate from 3-methyl-2-oxobutanoate: step 2/2. In terms of biological role, catalyzes the NADPH-dependent reduction of ketopantoate into pantoic acid. The protein is 2-dehydropantoate 2-reductase (panE) of Yersinia pestis.